Here is a 268-residue protein sequence, read N- to C-terminus: Ribosomal RNA small subunit methyltransferase A (268 aa).

S-adenosyl-L-methionine is bound by residues asparagine 18, leucine 20, glycine 45, glutamate 66, aspartate 91, and asparagine 112.

It belongs to the class I-like SAM-binding methyltransferase superfamily. rRNA adenine N(6)-methyltransferase family. RsmA subfamily.

It is found in the cytoplasm. The enzyme catalyses adenosine(1518)/adenosine(1519) in 16S rRNA + 4 S-adenosyl-L-methionine = N(6)-dimethyladenosine(1518)/N(6)-dimethyladenosine(1519) in 16S rRNA + 4 S-adenosyl-L-homocysteine + 4 H(+). Functionally, specifically dimethylates two adjacent adenosines (A1518 and A1519) in the loop of a conserved hairpin near the 3'-end of 16S rRNA in the 30S particle. May play a critical role in biogenesis of 30S subunits. This is Ribosomal RNA small subunit methyltransferase A from Shewanella oneidensis (strain ATCC 700550 / JCM 31522 / CIP 106686 / LMG 19005 / NCIMB 14063 / MR-1).